The sequence spans 106 residues: Large ribosomal subunit protein uL24 (106 aa).

It belongs to the universal ribosomal protein uL24 family. Part of the 50S ribosomal subunit.

Functionally, one of two assembly initiator proteins, it binds directly to the 5'-end of the 23S rRNA, where it nucleates assembly of the 50S subunit. In terms of biological role, one of the proteins that surrounds the polypeptide exit tunnel on the outside of the subunit. The protein is Large ribosomal subunit protein uL24 of Syntrophus aciditrophicus (strain SB).